A 470-amino-acid chain; its full sequence is ATP synthase subunit beta (470 aa).

Residue 157-164 (GGAGVGKT) participates in ATP binding.

Belongs to the ATPase alpha/beta chains family. As to quaternary structure, F-type ATPases have 2 components, CF(1) - the catalytic core - and CF(0) - the membrane proton channel. CF(1) has five subunits: alpha(3), beta(3), gamma(1), delta(1), epsilon(1). CF(0) has three main subunits: a(1), b(2) and c(9-12). The alpha and beta chains form an alternating ring which encloses part of the gamma chain. CF(1) is attached to CF(0) by a central stalk formed by the gamma and epsilon chains, while a peripheral stalk is formed by the delta and b chains.

Its subcellular location is the cell inner membrane. It carries out the reaction ATP + H2O + 4 H(+)(in) = ADP + phosphate + 5 H(+)(out). Produces ATP from ADP in the presence of a proton gradient across the membrane. The catalytic sites are hosted primarily by the beta subunits. In Geobacter sulfurreducens (strain ATCC 51573 / DSM 12127 / PCA), this protein is ATP synthase subunit beta.